We begin with the raw amino-acid sequence, 656 residues long: Chaperone protein DnaK (656 aa).

Disordered regions lie at residues 488–532 (EMQE…DAVD) and 579–656 (YQQQ…DEDE). The span at 492-513 (EAEKHAEEDEKRRERIEARNEA) shows a compositional bias: basic and acidic residues. Acidic residues predominate over residues 523–532 (LLDENEDAVD). The segment covering 584-635 (GEGGAGAGAGAAGGMGGAGPGGMGGAGPGGMGGAGPGGMGGAGPGAGAGQQG) has biased composition (gly residues). Positions 636–656 (DGEEFVDADFEDVDDEDDEDE) are enriched in acidic residues.

This sequence belongs to the heat shock protein 70 family.

Functionally, acts as a chaperone. This Natronomonas pharaonis (strain ATCC 35678 / DSM 2160 / CIP 103997 / JCM 8858 / NBRC 14720 / NCIMB 2260 / Gabara) (Halobacterium pharaonis) protein is Chaperone protein DnaK.